The primary structure comprises 198 residues: Photosystem I assembly protein Ycf4 (198 aa).

Residues 1–20 (MTASTTINKGDSPNGDSSAS) are disordered. Transmembrane regions (helical) follow at residues 36-58 (YWWA…SSYL) and 78-100 (LVMG…VILW).

It belongs to the Ycf4 family.

The protein localises to the cellular thylakoid membrane. Its function is as follows. Seems to be required for the assembly of the photosystem I complex. In Nostoc sp. (strain PCC 7120 / SAG 25.82 / UTEX 2576), this protein is Photosystem I assembly protein Ycf4.